A 123-amino-acid polypeptide reads, in one-letter code: Large ribosomal subunit protein uL29y (123 aa).

It belongs to the universal ribosomal protein uL29 family.

This chain is Large ribosomal subunit protein uL29y (RPL35B), found in Arabidopsis thaliana (Mouse-ear cress).